Consider the following 466-residue polypeptide: tRNA-2-methylthio-N(6)-dimethylallyladenosine synthase (466 aa).

In terms of domain architecture, MTTase N-terminal spans 5 to 125 (RKLHIKSYGC…LPELLARAGR (121 aa)). Residues C14, C50, C88, C166, C170, and C173 each contribute to the [4Fe-4S] cluster site. Residues 152–384 (RARGVSAFVT…QSLIDSQQAA (233 aa)) enclose the Radical SAM core domain. The TRAM domain occupies 387–449 (KAAIGTVVDV…RYSLLGELVA (63 aa)).

This sequence belongs to the methylthiotransferase family. MiaB subfamily. As to quaternary structure, monomer. [4Fe-4S] cluster serves as cofactor.

It is found in the cytoplasm. It carries out the reaction N(6)-dimethylallyladenosine(37) in tRNA + (sulfur carrier)-SH + AH2 + 2 S-adenosyl-L-methionine = 2-methylsulfanyl-N(6)-dimethylallyladenosine(37) in tRNA + (sulfur carrier)-H + 5'-deoxyadenosine + L-methionine + A + S-adenosyl-L-homocysteine + 2 H(+). Functionally, catalyzes the methylthiolation of N6-(dimethylallyl)adenosine (i(6)A), leading to the formation of 2-methylthio-N6-(dimethylallyl)adenosine (ms(2)i(6)A) at position 37 in tRNAs that read codons beginning with uridine. The sequence is that of tRNA-2-methylthio-N(6)-dimethylallyladenosine synthase from Bradyrhizobium sp. (strain BTAi1 / ATCC BAA-1182).